The primary structure comprises 508 residues: DDB1- and CUL4-associated factor 10 (508 aa).

Residues 1–75 (MSSGHPSDNE…GSASGSGCRG (75 aa)) are disordered. A compositionally biased stretch (basic and acidic residues) spans 7 to 17 (SDNEEPRADLL). Acidic residues predominate over residues 18–32 (REEEEEEEEEEDSDE). A compositionally biased stretch (gly residues) spans 63–75 (GGTGSASGSGCRG). WD repeat units follow at residues 126–165 (QTHGAVFNLEYSPDGSVLTVACEQTEVLLFDPVSSRHIKT), 169–207 (AHEDCVNNIRFLDNRLFATCSDDTTIALWDLRKLNSKVC), 211–250 (GHASWVKNIEYDTHTRLLVTSGFDGNVITWDTNRFTEDGC), and 256–295 (FHTRYLMRMRLTPDCSKMLISTSSGYLLILHDLDLTQSLE). The tract at residues 307–343 (PPLSTEGSSAGSRSGGPRHTIDNKNHPHREGLSPRNS) is disordered. Residues 325 to 338 (HTIDNKNHPHREGL) show a composition bias toward basic and acidic residues. 3 WD repeats span residues 356–396 (DRGN…QEGA), 419–457 (VGRGYIKELCFSPDGRLICSPYGYGVRLLAFDENCAELV), and 475–508 (SHSDVVLTSKFSPTHCQFASGCLSGRVALYQPHF).

This sequence belongs to the WD repeat DCAF10 family.

It functions in the pathway protein modification; protein ubiquitination. In terms of biological role, may function as a substrate receptor for CUL4-DDB1 E3 ubiquitin-protein ligase complex. The chain is DDB1- and CUL4-associated factor 10 (dcaf10) from Danio rerio (Zebrafish).